Here is a 370-residue protein sequence, read N- to C-terminus: Protein commissureless 1 (370 aa).

The Extracellular portion of the chain corresponds to 1-136 (MISTTDYPTV…DADMHVIINY (136 aa)). The segment at 108-131 (LRDRSEESGESSWWSQIFGDADMH) is required for vesicular localization. Residues 137-157 (LWIGVVSSLVILSLVFILFSC) form a helical membrane-spanning segment. Over 158–370 (YFYRKFRTWK…CASLVVVVAA (213 aa)) the chain is Cytoplasmic. 2 short sequence motifs (PY-motif) span residues 220-223 (PPCY) and 229-232 (LPSY). Positions 227–237 (TGLPSYDEALH) are interaction with Nedd4. Residues 287-312 (VEEDKADSSSSTSASASPSSSESSNL) are disordered. Over residues 294–312 (SSSSTSASASPSSSESSNL) the composition is skewed to low complexity.

Belongs to the commissureless family. As to quaternary structure, interacts (probably via PY-motifs) with Nedd4 (via WW2 domain). Interacts with Robo. Ubiquitinated by Nedd4; which promotes endocytosis of the comm/robo complex and comm proteasomal degradation. Not ubiquitinated by Nedd4.

It is found in the cytoplasmic vesicle membrane. The protein resides in the cell membrane. Functionally, controls axon guidance across the CNS midline by preventing the delivery of Robo to the growth cone. The polypeptide is Protein commissureless 1 (Drosophila melanogaster (Fruit fly)).